We begin with the raw amino-acid sequence, 430 residues long: Tyrosine--tRNA ligase (430 aa).

Tyr32 is an L-tyrosine binding site. The 'HIGH' region motif lies at 37 to 46; that stretch reads PTADSLHIGH. Tyr172 and Gln176 together coordinate L-tyrosine. A 'KMSKS' region motif is present at residues 232–236; sequence KFGKT. Lys235 contacts ATP. An S4 RNA-binding domain is found at 362–429; sequence VKAVDLFVDN…GKKNYYLIIA (68 aa).

Belongs to the class-I aminoacyl-tRNA synthetase family. TyrS type 1 subfamily. Homodimer.

The protein resides in the cytoplasm. It catalyses the reaction tRNA(Tyr) + L-tyrosine + ATP = L-tyrosyl-tRNA(Tyr) + AMP + diphosphate + H(+). Catalyzes the attachment of tyrosine to tRNA(Tyr) in a two-step reaction: tyrosine is first activated by ATP to form Tyr-AMP and then transferred to the acceptor end of tRNA(Tyr). The chain is Tyrosine--tRNA ligase from Bacteroides fragilis (strain ATCC 25285 / DSM 2151 / CCUG 4856 / JCM 11019 / LMG 10263 / NCTC 9343 / Onslow / VPI 2553 / EN-2).